The chain runs to 1406 residues: Enhancer of mRNA-decapping protein 4 (1406 aa).

Ala-2 is modified (N-acetylalanine). A phosphoserine mark is found at Ser-3 and Ser-6. Lys-125 is subject to N6-acetyllysine. WD repeat units follow at residues 174 to 214, 230 to 277, 295 to 334, and 342 to 393; these read GFTG…GKIQ, NHFR…SSHN, GHST…QDEP, and PHDG…CLQT. Phosphoserine is present on residues Ser-560, Ser-565, Ser-583, and Ser-585. 2 disordered regions span residues 604 to 631 and 667 to 686; these read SLQQ…SSSS and SLTL…SLLP. Residues 609–631 are compositionally biased toward low complexity; the sequence is SASPSSSSSSSSSSSSSSSSSSS. Residues Ser-680, Ser-712, Ser-727, and Ser-729 each carry the phosphoserine modification. Residues 719-744 are disordered; it reads EPLGLPQASPSRTRSPDVISSASTAL. Over residues 726-744 the composition is skewed to polar residues; that stretch reads ASPSRTRSPDVISSASTAL. Phosphothreonine is present on Thr-731. Phosphoserine occurs at positions 733 and 745. 2 disordered regions span residues 782–855 and 873–951; these read HLLS…NGLQ and QRDS…VAEP. Polar residues-rich tracts occupy residues 823-832 and 841-852; these read EVATPDSQVW and ETCSTLTESPRN. Thr-826 is modified (phosphothreonine). Phosphoserine is present on residues Ser-849 and Ser-876. Thr-879 carries the phosphothreonine modification. Residues Ser-880, Ser-884, Ser-892, Ser-895, and Ser-897 each carry the phosphoserine modification. Phosphothreonine is present on Thr-906. Residues 971 to 1030 are a coiled coil; it reads HNQEELLQRLCAQLEGLQSTVTDHVERALETRHEQEQRRLERALAEGQQRGGQLQEQLTQ. Position 1385 is a phosphoserine (Ser-1385).

The protein belongs to the WD repeat EDC4 family. In terms of assembly, part of a decapping complex consisting of DCP1A, DCP2, EDC3, EDC4 and probably DDX6. Part of a complex consisting of DCP1A, EDC3, EDC4 and DDX6. Part of a complex consisting of DCP1B, EDC3, EDC4 and DDX6. Interacts with DCP2. Interacts with RC3H1. Interacts with NBDY. Interacts with Tex19.1 and, probably, Tex19.2. Interacts with LSM14A. Interacts with DDX6.

It localises to the cytoplasm. Its subcellular location is the P-body. The protein localises to the nucleus. In terms of biological role, in the process of mRNA degradation, seems to play a role in mRNA decapping. Component of a complex containing DCP2 and DCP1A which functions in decapping of ARE-containing mRNAs. Promotes complex formation between DCP1A and DCP2. Enhances the catalytic activity of DCP2 (in vitro). The chain is Enhancer of mRNA-decapping protein 4 from Mus musculus (Mouse).